Reading from the N-terminus, the 308-residue chain is Methionyl-tRNA formyltransferase (308 aa).

S110–P113 provides a ligand contact to (6S)-5,6,7,8-tetrahydrofolate.

Belongs to the Fmt family.

The enzyme catalyses L-methionyl-tRNA(fMet) + (6R)-10-formyltetrahydrofolate = N-formyl-L-methionyl-tRNA(fMet) + (6S)-5,6,7,8-tetrahydrofolate + H(+). Attaches a formyl group to the free amino group of methionyl-tRNA(fMet). The formyl group appears to play a dual role in the initiator identity of N-formylmethionyl-tRNA by promoting its recognition by IF2 and preventing the misappropriation of this tRNA by the elongation apparatus. This Neisseria gonorrhoeae (strain NCCP11945) protein is Methionyl-tRNA formyltransferase.